The sequence spans 298 residues: Acetylglutamate kinase (298 aa).

Substrate is bound by residues 69 to 70 (GG), arginine 91, and asparagine 196.

The protein belongs to the acetylglutamate kinase family. ArgB subfamily.

It localises to the cytoplasm. The enzyme catalyses N-acetyl-L-glutamate + ATP = N-acetyl-L-glutamyl 5-phosphate + ADP. It functions in the pathway amino-acid biosynthesis; L-arginine biosynthesis; N(2)-acetyl-L-ornithine from L-glutamate: step 2/4. Its function is as follows. Catalyzes the ATP-dependent phosphorylation of N-acetyl-L-glutamate. This chain is Acetylglutamate kinase, found in Nitrobacter winogradskyi (strain ATCC 25391 / DSM 10237 / CIP 104748 / NCIMB 11846 / Nb-255).